A 338-amino-acid polypeptide reads, in one-letter code: Large ribosomal subunit protein uL3 (338 aa).

The segment at 230 to 258 (HRKGHRRTGTIGPQAPAVMFTQPRPGQMG) is disordered.

The protein belongs to the universal ribosomal protein uL3 family. As to quaternary structure, part of the 50S ribosomal subunit. Forms a cluster with proteins L14 and L24e.

Functionally, one of the primary rRNA binding proteins, it binds directly near the 3'-end of the 23S rRNA, where it nucleates assembly of the 50S subunit. The polypeptide is Large ribosomal subunit protein uL3 (Pyrobaculum aerophilum (strain ATCC 51768 / DSM 7523 / JCM 9630 / CIP 104966 / NBRC 100827 / IM2)).